The following is a 265-amino-acid chain: Tryptophan synthase alpha chain (265 aa).

Active-site proton acceptor residues include Glu48 and Asp59.

The protein belongs to the TrpA family. Tetramer of two alpha and two beta chains.

It catalyses the reaction (1S,2R)-1-C-(indol-3-yl)glycerol 3-phosphate + L-serine = D-glyceraldehyde 3-phosphate + L-tryptophan + H2O. It functions in the pathway amino-acid biosynthesis; L-tryptophan biosynthesis; L-tryptophan from chorismate: step 5/5. The alpha subunit is responsible for the aldol cleavage of indoleglycerol phosphate to indole and glyceraldehyde 3-phosphate. The polypeptide is Tryptophan synthase alpha chain (Pelagibacter ubique (strain HTCC1062)).